A 587-amino-acid polypeptide reads, in one-letter code: Aspartate--tRNA ligase (587 aa).

Glu174 is an L-aspartate binding site. The interval 198-201 is aspartate; the sequence is QITK. Residue Arg220 coordinates L-aspartate. Residues 220-222 and Gln229 each bind ATP; that span reads RDE. His443 contributes to the L-aspartate binding site. Residue Glu477 coordinates ATP. Arg484 is an L-aspartate binding site. 529–532 contacts ATP; that stretch reads GLDR.

It belongs to the class-II aminoacyl-tRNA synthetase family. Type 1 subfamily. In terms of assembly, homodimer.

The protein resides in the cytoplasm. It carries out the reaction tRNA(Asp) + L-aspartate + ATP = L-aspartyl-tRNA(Asp) + AMP + diphosphate. Functionally, catalyzes the attachment of L-aspartate to tRNA(Asp) in a two-step reaction: L-aspartate is first activated by ATP to form Asp-AMP and then transferred to the acceptor end of tRNA(Asp). In Streptococcus pneumoniae (strain 70585), this protein is Aspartate--tRNA ligase.